A 595-amino-acid chain; its full sequence is Adenine deaminase (595 aa).

It belongs to the metallo-dependent hydrolases superfamily. Adenine deaminase family. As to quaternary structure, homodimer. Requires Mn(2+) as cofactor.

It carries out the reaction adenine + H2O + H(+) = hypoxanthine + NH4(+). The polypeptide is Adenine deaminase (Serratia proteamaculans (strain 568)).